The chain runs to 357 residues: UDP-3-O-acylglucosamine N-acyltransferase (357 aa).

Residue His-258 is the Proton acceptor of the active site.

The protein belongs to the transferase hexapeptide repeat family. LpxD subfamily. In terms of assembly, homotrimer.

It catalyses the reaction a UDP-3-O-[(3R)-3-hydroxyacyl]-alpha-D-glucosamine + a (3R)-hydroxyacyl-[ACP] = a UDP-2-N,3-O-bis[(3R)-3-hydroxyacyl]-alpha-D-glucosamine + holo-[ACP] + H(+). The protein operates within bacterial outer membrane biogenesis; LPS lipid A biosynthesis. In terms of biological role, catalyzes the N-acylation of UDP-3-O-acylglucosamine using 3-hydroxyacyl-ACP as the acyl donor. Is involved in the biosynthesis of lipid A, a phosphorylated glycolipid that anchors the lipopolysaccharide to the outer membrane of the cell. This Azorhizobium caulinodans (strain ATCC 43989 / DSM 5975 / JCM 20966 / LMG 6465 / NBRC 14845 / NCIMB 13405 / ORS 571) protein is UDP-3-O-acylglucosamine N-acyltransferase.